We begin with the raw amino-acid sequence, 103 residues long: Large ribosomal subunit protein bL21 (103 aa).

Belongs to the bacterial ribosomal protein bL21 family. Part of the 50S ribosomal subunit. Contacts protein L20.

This protein binds to 23S rRNA in the presence of protein L20. The sequence is that of Large ribosomal subunit protein bL21 from Lactobacillus delbrueckii subsp. bulgaricus (strain ATCC 11842 / DSM 20081 / BCRC 10696 / JCM 1002 / NBRC 13953 / NCIMB 11778 / NCTC 12712 / WDCM 00102 / Lb 14).